A 322-amino-acid polypeptide reads, in one-letter code: Lactamase-like protein nscB (322 aa).

H97, H99, D101, and H102 together coordinate Zn(2+). D101 acts as the Proton donor/acceptor in catalysis.

It belongs to the metallo-beta-lactamase superfamily. Requires Zn(2+) as cofactor.

The protein operates within secondary metabolite biosynthesis. Functionally, lactamase-like protein; part of the gene cluster that mediates the biosynthesis of neosartoricin B, a prenylated anthracenone that probably exhibits T-cell antiproliferative activity, suggestive of a physiological role as an immunosuppressive agent. The non-reducing polyketide synthase nscA probably synthesizes and cyclizes the decaketide backbone. The hydrolase nscB then mediates the product release through hydrolysis followed by spontaneous decarboxylation. The prenyltransferase nscD catalyzes the addition of the dimethylallyl group to the aromatic C5. The FAD-dependent monooxygenase nscC is then responsible for the stereospecific hydroxylation at C2. Neosartoricin B can be converted into two additional compounds neosartoricins C and D. Neosartoricin C is a spirocyclic compound that is cyclized through the attack of C3 hydroxyl on C14, followed by dehydration. On the other hand, neosartoricin D is a further cyclized compound in which attack of C2 on C14 in neosartoricin C results in the formation of the acetal-containing dioxabicyclo-octanone ring. Both of these compounds are novel and possibly represent related metabolites of the gene cluster. The chain is Lactamase-like protein nscB from Trichophyton rubrum (strain ATCC MYA-4607 / CBS 118892) (Athlete's foot fungus).